We begin with the raw amino-acid sequence, 470 residues long: Histone deacetylase HOS1 (470 aa).

The interval 47–392 (LTFPYARKDD…YTYLTWCVTK (346 aa)) is histone deacetylase. A Phosphoserine modification is found at Ser110. His211 is a catalytic residue.

Belongs to the histone deacetylase family. HD type 1 subfamily.

It localises to the nucleus. The enzyme catalyses N(6)-acetyl-L-lysyl-[histone] + H2O = L-lysyl-[histone] + acetate. Its function is as follows. Responsible for the deacetylation of lysine residues on the N-terminal part of the core histones (H2A, H2B, H3 and H4). Histone deacetylation plays an important role in transcriptional regulation, cell cycle progression and developmental events. Histone deacetylases act via the formation of large multiprotein complexes. The polypeptide is Histone deacetylase HOS1 (HOS1) (Saccharomyces cerevisiae (strain ATCC 204508 / S288c) (Baker's yeast)).